The following is a 565-amino-acid chain: Translation machinery-associated protein 64 (565 aa).

In terms of domain architecture, PUA spans leucine 89–asparagine 170. The 86-residue stretch at threonine 362–asparagine 447 folds into the SWIB/MDM2 domain. Residues isoleucine 475–glycine 547 form the SUI1 domain.

Belongs to the eIF2D family. As to quaternary structure, interacts with the 40S ribosomal subunit.

The chain is Translation machinery-associated protein 64 (TMA64) from Saccharomyces cerevisiae (strain ATCC 204508 / S288c) (Baker's yeast).